The primary structure comprises 390 residues: Methylthioribose-1-phosphate isomerase (390 aa).

Substrate-binding positions include 53–55 (RGA), arginine 90, and glutamine 207. Aspartate 248 (proton donor) is an active-site residue. 258–259 (NK) contributes to the substrate binding site.

Belongs to the EIF-2B alpha/beta/delta subunits family. MtnA subfamily.

The enzyme catalyses 5-(methylsulfanyl)-alpha-D-ribose 1-phosphate = 5-(methylsulfanyl)-D-ribulose 1-phosphate. The catalysed reaction is 5-deoxy-alpha-D-ribose 1-phosphate = 5-deoxy-D-ribulose 1-phosphate. It functions in the pathway amino-acid biosynthesis; L-methionine biosynthesis via salvage pathway; L-methionine from S-methyl-5-thio-alpha-D-ribose 1-phosphate: step 1/6. Functionally, catalyzes the interconversion of methylthioribose-1-phosphate (MTR-1-P) into methylthioribulose-1-phosphate (MTRu-1-P). Also catalyzes the interconversion of 5-deoxyribose 1-phosphate and 5-deoxyribulose 1-phosphate. Part of a bifunctional DHAP-shunt salvage pathway for SAM by-products. In Rhodospirillum rubrum (strain ATCC 11170 / ATH 1.1.1 / DSM 467 / LMG 4362 / NCIMB 8255 / S1), this protein is Methylthioribose-1-phosphate isomerase.